Reading from the N-terminus, the 248-residue chain is Transcription factor MYBC1 (248 aa).

Positions 102 to 161 (TLKRPRLVWTPQLHKRFVDAVGHLGIKNAVPKTIMQLMSVEGLTRENVASHLQKYRLYLR) form a DNA-binding region, myb-like GARP.

As to expression, expressed in roots, leaves, stems, petioles, filaments, stigma, pedicels, sepals, anthers, petals, and siliques.

The protein resides in the nucleus. Functionally, probable transcription factor that acts as a negative regulator of freezing tolerance via a CBF-independent pathway. The sequence is that of Transcription factor MYBC1 from Arabidopsis thaliana (Mouse-ear cress).